A 380-amino-acid chain; its full sequence is Cytochrome b (380 aa).

A run of 4 helical transmembrane segments spans residues 34–54 (FGSL…LLAA), 78–99 (WLIR…YLHI), 114–134 (WNTG…GYVL), and 179–199 (FFTL…IHLT). Heme b contacts are provided by His-84 and His-98. Residues His-183 and His-197 each contribute to the heme b site. His-202 provides a ligand contact to a ubiquinone. Transmembrane regions (helical) follow at residues 227–247 (LKDI…ALFS), 289–309 (LGGV…PLLH), 321–341 (LSQL…WVGS), and 348–368 (FMII…VLFP).

The protein belongs to the cytochrome b family. The cytochrome bc1 complex contains 11 subunits: 3 respiratory subunits (MT-CYB, CYC1 and UQCRFS1), 2 core proteins (UQCRC1 and UQCRC2) and 6 low-molecular weight proteins (UQCRH/QCR6, UQCRB/QCR7, UQCRQ/QCR8, UQCR10/QCR9, UQCR11/QCR10 and a cleavage product of UQCRFS1). This cytochrome bc1 complex then forms a dimer. Heme b is required as a cofactor.

The protein localises to the mitochondrion inner membrane. Functionally, component of the ubiquinol-cytochrome c reductase complex (complex III or cytochrome b-c1 complex) that is part of the mitochondrial respiratory chain. The b-c1 complex mediates electron transfer from ubiquinol to cytochrome c. Contributes to the generation of a proton gradient across the mitochondrial membrane that is then used for ATP synthesis. This is Cytochrome b (MT-CYB) from Anthropoides virgo (Demoiselle crane).